A 275-amino-acid polypeptide reads, in one-letter code: Phosphate import ATP-binding protein PstB 2 (275 aa).

The ABC transporter domain occupies 29 to 270 (LEVKNLNIYY…PSEKKTEDYI (242 aa)). 61–68 (GPSGCGKS) is a binding site for ATP.

The protein belongs to the ABC transporter superfamily. Phosphate importer (TC 3.A.1.7) family. The complex is composed of two ATP-binding proteins (PstB), two transmembrane proteins (PstC and PstA) and a solute-binding protein (PstS).

It localises to the cell membrane. The enzyme catalyses phosphate(out) + ATP + H2O = ADP + 2 phosphate(in) + H(+). Its function is as follows. Part of the ABC transporter complex PstSACB involved in phosphate import. Responsible for energy coupling to the transport system. This chain is Phosphate import ATP-binding protein PstB 2, found in Bacillus licheniformis (strain ATCC 14580 / DSM 13 / JCM 2505 / CCUG 7422 / NBRC 12200 / NCIMB 9375 / NCTC 10341 / NRRL NRS-1264 / Gibson 46).